The chain runs to 508 residues: Lysine--tRNA ligase (508 aa).

The Mg(2+) site is built by E418 and E425.

The protein belongs to the class-II aminoacyl-tRNA synthetase family. As to quaternary structure, homodimer. It depends on Mg(2+) as a cofactor.

It localises to the cytoplasm. It catalyses the reaction tRNA(Lys) + L-lysine + ATP = L-lysyl-tRNA(Lys) + AMP + diphosphate. This is Lysine--tRNA ligase from Burkholderia vietnamiensis (strain G4 / LMG 22486) (Burkholderia cepacia (strain R1808)).